The chain runs to 101 residues: Ferredoxin Fdx2 (101 aa).

2 4Fe-4S ferredoxin-type domains span residues 1 to 29 (MATY…EGDE) and 31 to 64 (YVID…PNPQ). [4Fe-4S] cluster is bound by residues Cys9, Cys12, Cys15, Cys19, Cys38, Cys41, Cys50, and Cys54.

The cofactor is [4Fe-4S] cluster.

Ferredoxins are iron-sulfur proteins that transfer electrons in a wide variety of metabolic reactions. Fdx2 can receive electrons from both FdR_A and FdR_B ferredoxin reductases, with a preference for FdR_B compared with FdR_A, and transfer the electrons to the cytochrome P450 CYP260A1. The protein is Ferredoxin Fdx2 of Sorangium cellulosum (strain So ce56) (Polyangium cellulosum (strain So ce56)).